The sequence spans 145 residues: Partner of bursicon (145 aa).

A signal peptide spans 1 to 28 (MKENFSIMFIHSIFLILIIFIYSNETIA). Intrachain disulfides connect Cys-36–Cys-94, Cys-60–Cys-109, Cys-69–Cys-135, Cys-73–Cys-137, and Cys-91–Cys-140. Residues 36-131 (CETLQSEVHI…NGVMEIKIRE (96 aa)) form the CTCK domain.

Heterodimer of burs and pburs.

It localises to the secreted. Final heterodimeric neurohormone released at the end of the molting cycle, involved in the sclerotization (tanning) of the insect cuticle, melanization and wing spreading. The protein is Partner of bursicon (pburs) of Apis mellifera (Honeybee).